The primary structure comprises 282 residues: MAGAGLIGIRRRIKSVTNIRKITKAMGLVSTAKLRKARVNLEINKKYYNEYKIILKDIINFIEDSNIYIDGNGSHKKLYVIFTSDSGLCGSFNINIINNVINEIKEDKENSLVIVIGQKGRMYLKKLGINTLAEYIEIPDVPTTKEAGTIAKNIIKLYSSKEVGEVFLVYSEFYSPVKQQVLINKILPFTKENKSDNKYIEFNPPVTQLMDEILENYLKATILNCFSNSKASENGSRMTAMNGATDNANDLLDNLDLQFNRLRQSAITQEISEIVGGAEAQR.

It belongs to the ATPase gamma chain family. F-type ATPases have 2 components, CF(1) - the catalytic core - and CF(0) - the membrane proton channel. CF(1) has five subunits: alpha(3), beta(3), gamma(1), delta(1), epsilon(1). CF(0) has three main subunits: a, b and c.

The protein localises to the cell membrane. Functionally, produces ATP from ADP in the presence of a proton gradient across the membrane. The gamma chain is believed to be important in regulating ATPase activity and the flow of protons through the CF(0) complex. The protein is ATP synthase gamma chain of Clostridium botulinum (strain ATCC 19397 / Type A).